The primary structure comprises 34 residues: Photosystem II reaction center protein M (34 aa).

A helical transmembrane segment spans residues 5 to 25 (ILAFSATALLILFPTALLLIL).

Belongs to the PsbM family. PSII is composed of 1 copy each of membrane proteins PsbA, PsbB, PsbC, PsbD, PsbE, PsbF, PsbH, PsbI, PsbJ, PsbK, PsbL, PsbM, PsbT, PsbX, PsbY, PsbZ, Psb30/Ycf12, at least 3 peripheral proteins of the oxygen-evolving complex and a large number of cofactors. It forms dimeric complexes.

Its subcellular location is the plastid membrane. In terms of biological role, one of the components of the core complex of photosystem II (PSII). PSII is a light-driven water:plastoquinone oxidoreductase that uses light energy to abstract electrons from H(2)O, generating O(2) and a proton gradient subsequently used for ATP formation. It consists of a core antenna complex that captures photons, and an electron transfer chain that converts photonic excitation into a charge separation. This subunit is found at the monomer-monomer interface. The chain is Photosystem II reaction center protein M from Cuscuta gronovii (Common dodder).